We begin with the raw amino-acid sequence, 235 residues long: Ion-translocating oxidoreductase complex subunit E (235 aa).

Helical transmembrane passes span 63–83, 93–113, 117–137, 152–172, and 206–226; these read LGLG…ISLF, IPIY…LMNA, TLYQ…IIIG, IWDG…LGAL, and SFLL…LLAI.

This sequence belongs to the NqrDE/RnfAE family. In terms of assembly, the complex is composed of six subunits: RnfA, RnfB, RnfC, RnfD, RnfE and RnfG.

The protein resides in the cell inner membrane. Functionally, part of a membrane-bound complex that couples electron transfer with translocation of ions across the membrane. This is Ion-translocating oxidoreductase complex subunit E from Haemophilus influenzae (strain 86-028NP).